A 567-amino-acid polypeptide reads, in one-letter code: MRQSQGFIPTLREVPADAEVKSHQLLLRAGFVRQSASGVYTFLPLGQRVLQKVEAIIREEMNRAGALELLMPALQPAELWQQSGRWYSYGPELMRLKDRHERDFVLGPTHEEMITTIVRDEVKTYKRLPLILYQIQTKFRDEKRPRFGLLRGREFIMKDAYSFHTSQESLDETYNKMYEAYANIFRRCGLNFRAVIADSGAMGGKDTHEFMVLSDIGEDTIAYSDASDYAANIEMAPVVTTYEKSSEPLVELKKVATPEQKTIAEVASYLQVAPERCIKSLLFNVDGRYVLVLVRGDHEANDVKVKNVLDATVVELATPEETERVMNCPVGSLGPIGVSEEVTIIADHAVAAIVNGVCGANEEGYHYTGVNPDRDFAVSQYADLRFVQEGDPSPDGNGTIRFARGIEVGHVFKLGTKYSEAMNAVYLDENGRTQTMIMGCYGIGVSRLVAAIAEQFADENGLVWPVSVAPFHVHLLTANAKSDEQRMLAEEWYEKLGQAGFDVLYDDRPERAGVKFADSDLIGIPLRVTVGKRASEGVVEVKVRKTGETFDVPVGELIETVRRLLQG.

It belongs to the class-II aminoacyl-tRNA synthetase family. ProS type 1 subfamily. As to quaternary structure, homodimer.

It localises to the cytoplasm. It catalyses the reaction tRNA(Pro) + L-proline + ATP = L-prolyl-tRNA(Pro) + AMP + diphosphate. Catalyzes the attachment of proline to tRNA(Pro) in a two-step reaction: proline is first activated by ATP to form Pro-AMP and then transferred to the acceptor end of tRNA(Pro). As ProRS can inadvertently accommodate and process non-cognate amino acids such as alanine and cysteine, to avoid such errors it has two additional distinct editing activities against alanine. One activity is designated as 'pretransfer' editing and involves the tRNA(Pro)-independent hydrolysis of activated Ala-AMP. The other activity is designated 'posttransfer' editing and involves deacylation of mischarged Ala-tRNA(Pro). The misacylated Cys-tRNA(Pro) is not edited by ProRS. This chain is Proline--tRNA ligase, found in Geobacillus thermodenitrificans (strain NG80-2).